The primary structure comprises 676 residues: DNA ligase (676 aa).

NAD(+)-binding positions include 35 to 39 (DNEYD), 84 to 85 (SL), and E115. K117 functions as the N6-AMP-lysine intermediate in the catalytic mechanism. 4 residues coordinate NAD(+): R138, E177, K294, and K318. C412, C415, C430, and C436 together coordinate Zn(2+). In terms of domain architecture, BRCT spans 595–676 (PTRQPLNGES…FLAFLAQYSA (82 aa)).

The protein belongs to the NAD-dependent DNA ligase family. LigA subfamily. Mg(2+) is required as a cofactor. Mn(2+) serves as cofactor.

It catalyses the reaction NAD(+) + (deoxyribonucleotide)n-3'-hydroxyl + 5'-phospho-(deoxyribonucleotide)m = (deoxyribonucleotide)n+m + AMP + beta-nicotinamide D-nucleotide.. DNA ligase that catalyzes the formation of phosphodiester linkages between 5'-phosphoryl and 3'-hydroxyl groups in double-stranded DNA using NAD as a coenzyme and as the energy source for the reaction. It is essential for DNA replication and repair of damaged DNA. This is DNA ligase from Acinetobacter baylyi (strain ATCC 33305 / BD413 / ADP1).